The chain runs to 264 residues: Neurexophilin-2 (264 aa).

A signal peptide spans 1–22 (MRLRPLPLVVVPGLLQLLFCDS). Residues 23–90 (EKVVHATEGL…WDWLANITEV (68 aa)) are II. Asn-86, Asn-139, Asn-149, and Asn-155 each carry an N-linked (GlcNAc...) asparagine glycan. The tract at residues 91–169 (QEPLARTKRR…LVPPSKVVEF (79 aa)) is III. Residues 170–178 (EVSPQSTLE) are IV (linker domain). Residues 179 to 264 (TKESKSFNCR…HSETPYLSSG (86 aa)) form a v (Cys-rich) region.

It belongs to the neurexophilin family. Post-translationally, may be proteolytically processed at the boundary between the N-terminal non-conserved and the central conserved domain in neuron-like cells. Brain, only in a scattered subpopulation of neurons that probably represent inhibitory interneurons.

The protein resides in the secreted. Functionally, may be signaling molecules that resemble neuropeptides and that act by binding to alpha-neurexins and possibly other receptors. This Bos taurus (Bovine) protein is Neurexophilin-2 (NXPH2).